Reading from the N-terminus, the 986-residue chain is Ubiquitin carboxyl-terminal hydrolase 37 (986 aa).

A KEN box 1 motif is present at residues 32 to 34; it reads KDN. Short sequence motifs (D-box) lie at residues 71-79 and 96-105; these read CLMLTLKDT and RMYLDAVHQD. Disordered stretches follow at residues 134-238 and 251-305; these read NRQF…MSDP and LKLK…KRSL. Over residues 149–159 the composition is skewed to basic and acidic residues; sequence VTVESKDETPF. A D-box 3 motif is present at residues 160–168; that stretch reads RKVLGTPAR. The segment covering 171–195 has biased composition (polar residues); that stretch reads VKNSSGTGAPSNRVNVAASPTSSVP. The KEN box 2 motif lies at 224–226; sequence KEN. A compositionally biased stretch (basic and acidic residues) spans 251–260; it reads LKLKQEEENR. Residues 269 to 298 are compositionally biased toward low complexity; sequence SSSYYGSRSSSKEYSTSSSTLDRSSVSSQT. In terms of domain architecture, USP spans 344-958; it reads QGFSNLGNTC…SGYIFFYMHK (615 aa). Cys353 serves as the catalytic Nucleophile. 2 disordered regions span residues 683 to 710 and 729 to 751; these read VQRGIRKSSKRSKMEGDKPELGNAGFDG and SLSLSHDEDKPTSSPDTGFGDDE. The UIM 1 domain occupies 712–731; it reads SEDELLAAVLEISKREASLS. The segment covering 729–739 has biased composition (basic and acidic residues); it reads SLSLSHDEDKP. The short motif at 789–791 is the KEN box 3 element; sequence KEN. The disordered stretch occupies residues 811–840; sequence REREEQELQQALAQSLQEQEAREQKEDDDL. 2 consecutive UIM domains span residues 813 to 832 and 835 to 854; these read REEQELQQALAQSLQEQEAR and KEDDDLKRATELSLQEFNSS. The span at 818–828 shows a compositional bias: low complexity; that stretch reads LQQALAQSLQE. Positions 829-840 are enriched in basic and acidic residues; sequence QEAREQKEDDDL. Residue His913 is the Proton acceptor of the active site.

Belongs to the peptidase C19 family.

The catalysed reaction is Thiol-dependent hydrolysis of ester, thioester, amide, peptide and isopeptide bonds formed by the C-terminal Gly of ubiquitin (a 76-residue protein attached to proteins as an intracellular targeting signal).. Its function is as follows. Deubiquitinase that antagonizes the anaphase-promoting complex (APC/C) during G1/S transition by mediating deubiquitination of APC/C target proteins, thereby promoting S phase entry. Specifically mediates deubiquitination of 'Lys-11'-linked polyubiquitin chains, a specific ubiquitin-linkage type mediated by the APC/C complex. This is Ubiquitin carboxyl-terminal hydrolase 37 (USP37) from Gallus gallus (Chicken).